The primary structure comprises 689 residues: Glycine--tRNA ligase beta subunit (689 aa).

Belongs to the class-II aminoacyl-tRNA synthetase family. Tetramer of two alpha and two beta subunits.

The protein resides in the cytoplasm. It carries out the reaction tRNA(Gly) + glycine + ATP = glycyl-tRNA(Gly) + AMP + diphosphate. The protein is Glycine--tRNA ligase beta subunit of Acinetobacter baumannii (strain AB307-0294).